Consider the following 519-residue polypeptide: T-complex protein 11-like protein 2 (519 aa).

Positions 1–30 are disordered; sequence MPFNGEKQCVGEDQPSDSDSSRFSESMASL. A Phosphoserine modification is found at S16. Residues 17–29 show a composition bias toward low complexity; that stretch reads DSDSSRFSESMAS.

Belongs to the TCP11 family. As to quaternary structure, interacts with FMNL2; this interaction promotes muscle-derived satellite cell (MDSC) migration and differentiation.

The protein localises to the cytoplasm. Its subcellular location is the cytoskeleton. Its function is as follows. Promotes the migration of muscle-derived satellite cells (MDSCs) during differentiation throught interaction with FMNL2 and therefore may participate in microfilament assembly. The chain is T-complex protein 11-like protein 2 from Homo sapiens (Human).